We begin with the raw amino-acid sequence, 440 residues long: Alpha-ionylideneethane synthase aba3 (440 aa).

This sequence belongs to the alpha-ionylideneethane synthase family.

Its pathway is hormone biosynthesis. Alpha-ionylideneethane synthase; part of the gene cluster that mediates the biosynthesis of abscisic acid (ABA), a phytohormone that acts antagonistically toward salicylic acid (SA), jasmonic acid (JA) and ethylene (ETH) signaling, to impede plant defense responses. The first step of the pathway catalyzes the reaction from farnesyl diphosphate to alpha-ionylideneethane performed by the alpha-ionylideneethane synthase aba3 via a three-step reaction mechanism involving 2 neutral intermediates, beta-farnesene and allofarnesene. The cytochrome P450 monooxygenase aba1 might then be involved in the conversion of alpha-ionylideneethane to alpha-ionylideneacetic acid. Alpha-ionylideneacetic acid is further converted to abscisic acid in 2 steps involving the cytochrome P450 monooxygenase aba2 and the short-chain dehydrogenase/reductase aba4, via the intermediates 1'-deoxy-ABA or 1',4'-trans-diol-ABA, depending on the order of action of these 2 enzymes. Aba2 is responsible for the hydroxylation of carbon atom C-1' and aba4 might be involved in the oxidation of the C-4' carbon atom. This chain is Alpha-ionylideneethane synthase aba3, found in Botryotinia fuckeliana (strain B05.10) (Noble rot fungus).